Reading from the N-terminus, the 136-residue chain is MWGRWGKKGNLANRTKLSVNRPRRWRGTRLGNRTQCREDALRRWRLGRAEEGMGSTDGRWWGRAELGAKLLRIGRSGGTDRRLEGGRPRSVDNMGSRDGRWWGRAELGAKFLRIGRRGGTDRRLGTGAMWSVRFIR.

This is an uncharacterized protein from Gallus gallus (Chicken).